Reading from the N-terminus, the 284-residue chain is 4-diphosphocytidyl-2-C-methyl-D-erythritol kinase (284 aa).

Lysine 14 is a catalytic residue. 98 to 108 is a binding site for ATP; that stretch reads PMGGGLGGGSS. The active site involves aspartate 140.

Belongs to the GHMP kinase family. IspE subfamily.

The catalysed reaction is 4-CDP-2-C-methyl-D-erythritol + ATP = 4-CDP-2-C-methyl-D-erythritol 2-phosphate + ADP + H(+). It participates in isoprenoid biosynthesis; isopentenyl diphosphate biosynthesis via DXP pathway; isopentenyl diphosphate from 1-deoxy-D-xylulose 5-phosphate: step 3/6. Functionally, catalyzes the phosphorylation of the position 2 hydroxy group of 4-diphosphocytidyl-2C-methyl-D-erythritol. The chain is 4-diphosphocytidyl-2-C-methyl-D-erythritol kinase from Shewanella piezotolerans (strain WP3 / JCM 13877).